Consider the following 898-residue polypeptide: Alanine--tRNA ligase (898 aa).

The Zn(2+) site is built by H589, H593, C693, and H697.

This sequence belongs to the class-II aminoacyl-tRNA synthetase family. The cofactor is Zn(2+).

It is found in the cytoplasm. The enzyme catalyses tRNA(Ala) + L-alanine + ATP = L-alanyl-tRNA(Ala) + AMP + diphosphate. Its function is as follows. Catalyzes the attachment of alanine to tRNA(Ala) in a two-step reaction: alanine is first activated by ATP to form Ala-AMP and then transferred to the acceptor end of tRNA(Ala). Also edits incorrectly charged Ser-tRNA(Ala) and Gly-tRNA(Ala) via its editing domain. In Methanothermobacter thermautotrophicus (strain ATCC 29096 / DSM 1053 / JCM 10044 / NBRC 100330 / Delta H) (Methanobacterium thermoautotrophicum), this protein is Alanine--tRNA ligase.